A 330-amino-acid polypeptide reads, in one-letter code: D-alanine--D-alanine ligase (330 aa).

Positions 122–323 constitute an ATP-grasp domain; the sequence is NRFLSGFGIR…MKEVLCTIIR (202 aa). ATP is bound at residue 151–206; that stretch reads TARMGLPLFVKPNVGGSSIATTKVVEAAQLLPAIGQAFSEGEEVMIERLICGTEVT. Residues D277, E290, and N292 each contribute to the Mg(2+) site.

This sequence belongs to the D-alanine--D-alanine ligase family. Mg(2+) serves as cofactor. Mn(2+) is required as a cofactor.

The protein localises to the cytoplasm. The enzyme catalyses 2 D-alanine + ATP = D-alanyl-D-alanine + ADP + phosphate + H(+). Its pathway is cell wall biogenesis; peptidoglycan biosynthesis. Cell wall formation. In Porphyromonas gingivalis (strain ATCC 33277 / DSM 20709 / CIP 103683 / JCM 12257 / NCTC 11834 / 2561), this protein is D-alanine--D-alanine ligase.